Reading from the N-terminus, the 411-residue chain is Arginine deiminase (411 aa).

Cysteine 401 functions as the Amidino-cysteine intermediate in the catalytic mechanism.

It belongs to the arginine deiminase family.

The protein resides in the cytoplasm. The catalysed reaction is L-arginine + H2O = L-citrulline + NH4(+). Its pathway is amino-acid degradation; L-arginine degradation via ADI pathway; carbamoyl phosphate from L-arginine: step 1/2. This chain is Arginine deiminase, found in Streptococcus equi subsp. zooepidemicus (strain MGCS10565).